A 214-amino-acid polypeptide reads, in one-letter code: Heat shock protein 30 (214 aa).

A sHSP domain is found at 66–183; the sequence is VPSSLTIQPV…AERVVPINCS (118 aa). Residues 193–214 form a disordered region; the sequence is SKTEGSITDTQKKQENTISKED. The span at 202-214 shows a compositional bias: basic and acidic residues; it reads TQKKQENTISKED.

Belongs to the small heat shock protein (HSP20) family.

The polypeptide is Heat shock protein 30 (hsp30) (Oncorhynchus tshawytscha (Chinook salmon)).